We begin with the raw amino-acid sequence, 155 residues long: Small ribosomal subunit protein uS7 (155 aa).

It belongs to the universal ribosomal protein uS7 family. In terms of assembly, part of the 30S ribosomal subunit. Contacts proteins S9 and S11.

One of the primary rRNA binding proteins, it binds directly to 16S rRNA where it nucleates assembly of the head domain of the 30S subunit. Is located at the subunit interface close to the decoding center, probably blocks exit of the E-site tRNA. In Malacoplasma penetrans (strain HF-2) (Mycoplasma penetrans), this protein is Small ribosomal subunit protein uS7.